A 102-amino-acid polypeptide reads, in one-letter code: NADH-quinone oxidoreductase subunit K 2 (102 aa).

Helical transmembrane passes span 1 to 21 (MIVPLLHILILAGILFVLGLV), 30 to 50 (IIMMLIGIEIMLNAAMLAFVG), and 65 to 85 (LMIMAMTSAEVSLALALVVYL).

This sequence belongs to the complex I subunit 4L family. As to quaternary structure, NDH-1 is composed of 14 different subunits. Subunits NuoA, H, J, K, L, M, N constitute the membrane sector of the complex.

It localises to the cell inner membrane. It catalyses the reaction a quinone + NADH + 5 H(+)(in) = a quinol + NAD(+) + 4 H(+)(out). NDH-1 shuttles electrons from NADH, via FMN and iron-sulfur (Fe-S) centers, to quinones in the respiratory chain. The immediate electron acceptor for the enzyme in this species is believed to be ubiquinone. Couples the redox reaction to proton translocation (for every two electrons transferred, four hydrogen ions are translocated across the cytoplasmic membrane), and thus conserves the redox energy in a proton gradient. The chain is NADH-quinone oxidoreductase subunit K 2 from Geotalea daltonii (strain DSM 22248 / JCM 15807 / FRC-32) (Geobacter daltonii).